Reading from the N-terminus, the 54-residue chain is Large ribosomal subunit protein bL33B (54 aa).

The protein belongs to the bacterial ribosomal protein bL33 family.

This Saccharopolyspora erythraea (strain ATCC 11635 / DSM 40517 / JCM 4748 / NBRC 13426 / NCIMB 8594 / NRRL 2338) protein is Large ribosomal subunit protein bL33B.